The chain runs to 445 residues: CBL-interacting serine/threonine-protein kinase 8 (445 aa).

Positions 9-262 constitute a Protein kinase domain; sequence YELGRTIGEG…IAEIRKDEWF (254 aa). ATP-binding positions include 15 to 23 and Lys38; that span reads IGEGTFAKV. Catalysis depends on Asp132, which acts as the Proton acceptor. An activation loop region spans residues 150–177; that stretch reads DFGLSALPEQGVTILKTTCGTPNYVAPE. Phosphoserine is present on Ser154. Thr166 carries the phosphothreonine modification. Residues 302–326 enclose the NAF domain; that stretch reads TGPLTLNAFDLIILSQGLNLATLFD. A PPI region spans residues 333-362; it reads KHQTRFISHKPANVVLSSMEVVSQSMGFKT.

This sequence belongs to the protein kinase superfamily. CAMK Ser/Thr protein kinase family. SNF1 subfamily. In terms of assembly, interacts with CBL1 and CBL9. Requires Mn(2+) as cofactor. Mostly expressed in roots, and, to a lower extent, in leaves, stems, flowers, and siliques.

The enzyme catalyses L-seryl-[protein] + ATP = O-phospho-L-seryl-[protein] + ADP + H(+). It catalyses the reaction L-threonyl-[protein] + ATP = O-phospho-L-threonyl-[protein] + ADP + H(+). In terms of biological role, CIPK serine-threonine protein kinases interact with CBL proteins. Binding of a CBL protein to the regulatory NAF domain of CIPK protein lead to the activation of the kinase in a calcium-dependent manner. The protein is CBL-interacting serine/threonine-protein kinase 8 (CIPK8) of Arabidopsis thaliana (Mouse-ear cress).